Reading from the N-terminus, the 362-residue chain is UV excision repair protein RAD23 homolog A (362 aa).

The 81-residue stretch at Met1–Thr81 folds into the Ubiquitin-like domain. 2 disordered regions span residues Lys80 to Gly160 and Gly201 to Gly227. Positions Pro88–Ser109 are enriched in low complexity. Lys122 participates in a covalent cross-link: Glycyl lysine isopeptide (Lys-Gly) (interchain with G-Cter in ubiquitin). 5 positions are modified to phosphoserine: Ser123, Ser128, Ser133, Ser136, and Ser138. Positions Glu126 to Ser144 are enriched in low complexity. One can recognise a UBA 1 domain in the interval Ser161–Gly201. Ser205, Ser294, and Ser356 each carry phosphoserine. Positions Pro317 to Gln357 constitute a UBA 2 domain.

It belongs to the RAD23 family. Interacts with XPC; the interaction is suggesting the existence of a functional equivalent variant XPC complex. Interacts with PSMD4 and PSMC5. Interacts with ATXN3. Interacts with UBQLN2.

It is found in the nucleus. Its function is as follows. Multiubiquitin chain receptor involved in modulation of proteasomal degradation. Binds to 'Lys-48'-linked polyubiquitin chains in a length-dependent manner and with a lower affinity to 'Lys-63'-linked polyubiquitin chains. Proposed to be capable to bind simultaneously to the 26S proteasome and to polyubiquitinated substrates and to deliver ubiquitinated proteins to the proteasome. Functionally, involved in nucleotide excision repair and is thought to be functional equivalent for RAD23B in global genome nucleotide excision repair (GG-NER) by association with XPC. In vitro, XPC:RAD23A dimer has NER activity. Can stabilize XPC. The chain is UV excision repair protein RAD23 homolog A (RAD23A) from Bos taurus (Bovine).